The following is a 1171-amino-acid chain: ATP-dependent helicase/deoxyribonuclease subunit B (1171 aa).

Residues 1–390 form the UvrD-like helicase ATP-binding domain; that stretch reads MSLRFVIGRA…HPLVECIRSA (390 aa). 8-15 is a binding site for ATP; the sequence is GRAGSGKS. One can recognise a UvrD-like helicase C-terminal domain in the interval 281 to 587; the sequence is MEQPRFHSPA…QFANIPPSLD (307 aa). Positions 805, 1129, 1132, and 1138 each coordinate [4Fe-4S] cluster.

It belongs to the helicase family. AddB/RexB type 1 subfamily. In terms of assembly, heterodimer of AddA and AddB. Mg(2+) is required as a cofactor. The cofactor is [4Fe-4S] cluster.

Its function is as follows. The heterodimer acts as both an ATP-dependent DNA helicase and an ATP-dependent, dual-direction single-stranded exonuclease. Recognizes the chi site generating a DNA molecule suitable for the initiation of homologous recombination. The AddB subunit has 5' -&gt; 3' nuclease activity but not helicase activity. This Bacillus cereus (strain ZK / E33L) protein is ATP-dependent helicase/deoxyribonuclease subunit B.